Reading from the N-terminus, the 39-residue chain is Potassium channel toxin alpha-KTx 2.1 (39 aa).

Intrachain disulfides connect cysteine 7–cysteine 29, cysteine 13–cysteine 34, and cysteine 17–cysteine 36. Residues 26-34 (GAKCMNGKC) are interaction with Ca(2+)-activated K(+) channels. Asparagine 39 bears the Asparagine amide mark.

The protein belongs to the short scorpion toxin superfamily. Potassium channel inhibitor family. Alpha-KTx 02 subfamily. As to expression, expressed by the venom gland.

The protein resides in the secreted. Functionally, blocks voltage-gated potassium channels (mKv1.1/KCNA1 (Kd&gt;25 nM), rKv1.2/KCNA2 (Kd=2 nM), mKv1.3/KCNA3 (Kd=1 nM), hKv1.5/KCNA5 (Kd&gt;25 nM) and mKv3.1/KCNC1 (Kd&gt;25 nM)) and calcium-activated potassium channels (KCa1.1/KCNMA1 and KCa3.1/KCNN4, Kd&gt;25 nM). The polypeptide is Potassium channel toxin alpha-KTx 2.1 (Centruroides noxius (Mexican scorpion)).